The sequence spans 347 residues: Hydroxymethylglutaryl-CoA synthase (347 aa).

Positions 29 and 30 each coordinate (3S)-3-hydroxy-3-methylglutaryl-CoA. Residue E80 is the Proton donor/acceptor of the active site. Residues C112 and T153 each contribute to the (3S)-3-hydroxy-3-methylglutaryl-CoA site. Catalysis depends on C112, which acts as the Acyl-thioester intermediate. R199 contacts CoA. (3S)-3-hydroxy-3-methylglutaryl-CoA is bound by residues T201 and H234. H234 functions as the Proton donor/acceptor in the catalytic mechanism. K239 lines the CoA pocket. (3S)-3-hydroxy-3-methylglutaryl-CoA contacts are provided by R243, N266, and S296.

This sequence belongs to the thiolase-like superfamily. Archaeal HMG-CoA synthase family. As to quaternary structure, interacts with acetoacetyl-CoA thiolase that catalyzes the precedent step in the pathway and with a DUF35 protein. The acetoacetyl-CoA thiolase/HMG-CoA synthase complex channels the intermediate via a fused CoA-binding site, which allows for efficient coupling of the endergonic thiolase reaction with the exergonic HMGCS reaction.

The enzyme catalyses acetoacetyl-CoA + acetyl-CoA + H2O = (3S)-3-hydroxy-3-methylglutaryl-CoA + CoA + H(+). The protein operates within metabolic intermediate biosynthesis; (R)-mevalonate biosynthesis; (R)-mevalonate from acetyl-CoA: step 2/3. Its function is as follows. Catalyzes the condensation of acetyl-CoA with acetoacetyl-CoA to form 3-hydroxy-3-methylglutaryl-CoA (HMG-CoA). Functions in the mevalonate (MVA) pathway leading to isopentenyl diphosphate (IPP), a key precursor for the biosynthesis of isoprenoid compounds that are building blocks of archaeal membrane lipids. In Methanocella arvoryzae (strain DSM 22066 / NBRC 105507 / MRE50), this protein is Hydroxymethylglutaryl-CoA synthase.